A 187-amino-acid chain; its full sequence is PsbQ-like protein 3, chloroplastic (187 aa).

A chloroplast-targeting transit peptide spans 1-32; sequence MAISKPPPLHFTFFHNQDSSIDTSDSNLALSI. The transit peptide at 33 to 60 directs the protein to the thylakoid; it reads DTSRRRRDVLLTISGTLIPQLFFFDRKR.

It belongs to the PsbQ family. As to quaternary structure, subunit of the lumenal protuberance of the NDH complex.

Its subcellular location is the plastid. The protein resides in the chloroplast thylakoid membrane. Its function is as follows. Required for both formation and activity of the chloroplast NAD(P)H dehydrogenase (NDH) complex. The chain is PsbQ-like protein 3, chloroplastic (PQL3) from Arabidopsis thaliana (Mouse-ear cress).